A 97-amino-acid chain; its full sequence is Co-chaperonin GroES (97 aa).

This sequence belongs to the GroES chaperonin family. As to quaternary structure, heptamer of 7 subunits arranged in a ring. Interacts with the chaperonin GroEL.

The protein resides in the cytoplasm. In terms of biological role, together with the chaperonin GroEL, plays an essential role in assisting protein folding. The GroEL-GroES system forms a nano-cage that allows encapsulation of the non-native substrate proteins and provides a physical environment optimized to promote and accelerate protein folding. GroES binds to the apical surface of the GroEL ring, thereby capping the opening of the GroEL channel. The sequence is that of Co-chaperonin GroES from Tolumonas auensis (strain DSM 9187 / NBRC 110442 / TA 4).